Consider the following 782-residue polypeptide: Protein NEDD1 (782 aa).

WD repeat units lie at residues 1-34 (MMSNLVEPSWRLLAASGGDTVKLFDVSADSGDPC), 41-80 (SPGCAVNSVKWNHTNLVVASTGEDKKISLWRKNGQSLGTV), 90-130 (SAEE…CIKK), 133-172 (GHTSTITGVMYNCKDEHLASVSVGGDLIVHNLASGARATE), 176-216 (PNGQ…PKMS), 220-260 (QHSA…SSSC), 262-301 (AYEAPFSSLAFGDNGYILVAGTSNGRVVFYDIRGKPQPVT), and 307-358 (SNSE…TPSA). Disordered stretches follow at residues 350-393 (PLPS…WPSG) and 467-512 (PIFD…EAWG). Polar residues-rich tracts occupy residues 352 to 362 (PSTTPSASQSA), 370 to 386 (VSASTVNASSVEQTPNR), and 488 to 498 (SFGSITPTASS). The stretch at 753-782 (VLSSILENQAEQMKELKLLRKENQELRQRL) forms a coiled coil.

In terms of tissue distribution, expressed in root meristematic cells.

The protein localises to the nucleus envelope. The protein resides in the chromosome. It localises to the centromere. It is found in the kinetochore. Its subcellular location is the cytoplasm. The protein localises to the cytoskeleton. The protein resides in the phragmoplast. It localises to the microtubule organizing center. In terms of biological role, regulates microtubules organization in a centrosome-independent manner. Required for the spindle to be positioned correctly and for the function of gamma-tubulin in organizing phragmoplast microtubules. Component of active gamma-tubulin ring complexes (gamma-TuRCs) associated with cortical microtubules in interphase cells. Mediates gamma-TuRC recruitment to the nucleation sites and is important for determining the ratio of branched to parallel nucleation. May mediate the localization of GCP2 and GCP3 to the nuclear envelope. This Arabidopsis thaliana (Mouse-ear cress) protein is Protein NEDD1.